We begin with the raw amino-acid sequence, 123 residues long: Small ribosomal subunit protein uS12 (123 aa).

Aspartate 89 carries the post-translational modification 3-methylthioaspartic acid. Residues 104–123 are disordered; that stretch reads TQGVKDRRQRRSKYGAKRPK. Residues 110–123 show a composition bias toward basic residues; the sequence is RRQRRSKYGAKRPK.

Belongs to the universal ribosomal protein uS12 family. As to quaternary structure, part of the 30S ribosomal subunit. Contacts proteins S8 and S17. May interact with IF1 in the 30S initiation complex.

Its function is as follows. With S4 and S5 plays an important role in translational accuracy. Interacts with and stabilizes bases of the 16S rRNA that are involved in tRNA selection in the A site and with the mRNA backbone. Located at the interface of the 30S and 50S subunits, it traverses the body of the 30S subunit contacting proteins on the other side and probably holding the rRNA structure together. The combined cluster of proteins S8, S12 and S17 appears to hold together the shoulder and platform of the 30S subunit. The protein is Small ribosomal subunit protein uS12 of Parvibaculum lavamentivorans (strain DS-1 / DSM 13023 / NCIMB 13966).